Here is an 852-residue protein sequence, read N- to C-terminus: Chitin synthase 1 (852 aa).

2 disordered regions span residues 27 to 46 (EDQDDMLPSTSAAAGETNYA) and 53 to 97 (SSLR…QANG). Over residues 53–74 (SSLRSQKSANKPTTAQNRNSAA) the composition is skewed to polar residues. Transmembrane regions (helical) follow at residues 492–509 (RWLNGSFFAGVYGLIHFR), 532–552 (VISLVFSWFSVGNFYIAFYFI), 572–592 (IFDFCKYAYAFLLFVIFICSM), 601–621 (FLFMACLVGFAIIMCYMLFCS), 686–706 (FLPYLLLLPGYINILNIYAFC), 787–807 (THLVLAWIACNALLVVFITTS), and 830–850 (CGLGIFRFLGSIMFLLLGIFT).

It belongs to the chitin synthase family. Class II subfamily.

It localises to the cell membrane. It catalyses the reaction [(1-&gt;4)-N-acetyl-beta-D-glucosaminyl](n) + UDP-N-acetyl-alpha-D-glucosamine = [(1-&gt;4)-N-acetyl-beta-D-glucosaminyl](n+1) + UDP + H(+). In terms of biological role, polymerizes chitin, a structural polymer of the cell wall and septum, by transferring the sugar moiety of UDP-GlcNAc to the non-reducing end of the growing chitin polymer. The protein is Chitin synthase 1 (CHS1) of Mucor circinelloides f. lusitanicus (Mucor racemosus var. lusitanicus).